Here is a 282-residue protein sequence, read N- to C-terminus: Transcription factor HES-1 (282 aa).

A disordered region spans residues 1–44 (MPADIMEKNSSSPVAATPASVNTTPDKPKTASEHRKSSKPIMEK). The span at 10-21 (SSSPVAATPASV) shows a compositional bias: low complexity. A compositionally biased stretch (basic and acidic residues) spans 26 to 35 (DKPKTASEHR). The region spanning 34-91 (HRKSSKPIMEKRRRARINESLSQLKTLILDALKKDSSRHSKLEKADILEMTVKHLRNL) is the bHLH domain. One can recognise an Orange domain in the interval 110-143 (YRAGFSECMNEVTRFLSTCEGVNTEVRTRLLGHL). 2 disordered regions span residues 158 to 204 (QAHP…GSAP) and 256 to 282 (TSVG…PWRN). Composition is skewed to pro residues over residues 164-174 (QAPPPPPPSGP) and 182-202 (FAPP…PPGS). Over residues 264 to 275 (SPSSGSSLTSDS) the composition is skewed to low complexity. The WRPW motif signature appears at 277 to 280 (WRPW).

In terms of assembly, interacts with SIRT1. Transcription repression requires formation of a complex with a corepressor protein of the Groucho/TLE family. Interacts (via WPRW motif) with TLE1, and more weakly with TLE2. Interacts with HES6. Interacts with an FA complex, composed of FANCA, FANCF, FANCG and FANCL, but not of FANCC, nor FANCE. As to expression, expressed at high levels in undifferentiated neural precursor cells, but the level of expression decreases as neural differentiation proceeds.

It localises to the nucleus. Functionally, transcriptional repressor of genes that require a bHLH protein for their transcription. May act as a negative regulator of myogenesis by inhibiting the functions of MYOD1 and ASH1. Binds DNA on N-box motifs: 5'-CACNAG-3' with high affinity and on E-box motifs: 5'-CANNTG-3' with low affinity. May play a role in a functional FA core complex response to DNA cross-link damage, being required for the stability and nuclear localization of FA core complex proteins, as well as for FANCD2 monoubiquitination in response to DNA damage. The sequence is that of Transcription factor HES-1 (Hes1) from Mus musculus (Mouse).